The primary structure comprises 473 residues: Ribulose bisphosphate carboxylase large chain 2 (473 aa).

2 residues coordinate substrate: asparagine 116 and threonine 166. The active-site Proton acceptor is the lysine 168. Lysine 170 is a binding site for substrate. Positions 194, 196, and 197 each coordinate Mg(2+). At lysine 194 the chain carries N6-carboxylysine. Catalysis depends on histidine 287, which acts as the Proton acceptor. Residues arginine 288, histidine 320, and serine 372 each contribute to the substrate site.

Belongs to the RuBisCO large chain family. Type I subfamily. As to quaternary structure, heterohexadecamer of 8 large chains and 8 small chains. The cofactor is Mg(2+).

The enzyme catalyses 2 (2R)-3-phosphoglycerate + 2 H(+) = D-ribulose 1,5-bisphosphate + CO2 + H2O. It catalyses the reaction D-ribulose 1,5-bisphosphate + O2 = 2-phosphoglycolate + (2R)-3-phosphoglycerate + 2 H(+). Its function is as follows. RuBisCO catalyzes two reactions: the carboxylation of D-ribulose 1,5-bisphosphate, the primary event in carbon dioxide fixation, as well as the oxidative fragmentation of the pentose substrate. Both reactions occur simultaneously and in competition at the same active site. The chain is Ribulose bisphosphate carboxylase large chain 2 from Acidithiobacillus ferrooxidans (Thiobacillus ferrooxidans).